The primary structure comprises 374 residues: Flavonoid O-methyltransferase-like protein Os11g0303600 (374 aa).

4 residues coordinate S-adenosyl-L-homocysteine: aspartate 242, aspartate 262, methionine 263, and lysine 276. The active-site Proton acceptor is the histidine 280.

It belongs to the class I-like SAM-binding methyltransferase superfamily. Cation-independent O-methyltransferase family. COMT subfamily.

The chain is Flavonoid O-methyltransferase-like protein Os11g0303600 from Oryza sativa subsp. japonica (Rice).